The sequence spans 386 residues: Patatin-04/09 (386 aa).

An N-terminal signal peptide occupies residues 1–23 (MATTKSFLILFFMILATTSSTCA). One can recognise a PNPLA domain in the interval 32-229 (LSIDGGGIKG…TVGDPALLSL (198 aa)). Residues 36 to 41 (GGGIKG) carry the GXGXXG motif. A GXSXG motif is present at residues 75-79 (GTSTG). The active-site Nucleophile is the serine 77. N-linked (GlcNAc...) asparagine glycosylation is present at asparagine 115. The active-site Proton acceptor is aspartate 215. The DGA/G motif lies at 215–217 (DGG). Residues 321-384 (ENALNGTTTE…DRKKLRANKA (64 aa)) adopt a coiled-coil conformation. Residue asparagine 325 is glycosylated (N-linked (GlcNAc...) asparagine).

This sequence belongs to the patatin family. Tuber.

It localises to the vacuole. Probable lipolytic acyl hydrolase (LAH), an activity which is thought to be involved in the response of tubers to pathogens. This Solanum tuberosum (Potato) protein is Patatin-04/09.